Consider the following 370-residue polypeptide: 4-hydroxy-3-methylbut-2-en-1-yl diphosphate synthase (flavodoxin) (370 aa).

Residues C268, C271, C303, and E310 each coordinate [4Fe-4S] cluster.

The protein belongs to the IspG family. [4Fe-4S] cluster serves as cofactor.

It catalyses the reaction (2E)-4-hydroxy-3-methylbut-2-enyl diphosphate + oxidized [flavodoxin] + H2O + 2 H(+) = 2-C-methyl-D-erythritol 2,4-cyclic diphosphate + reduced [flavodoxin]. The protein operates within isoprenoid biosynthesis; isopentenyl diphosphate biosynthesis via DXP pathway; isopentenyl diphosphate from 1-deoxy-D-xylulose 5-phosphate: step 5/6. Its function is as follows. Converts 2C-methyl-D-erythritol 2,4-cyclodiphosphate (ME-2,4cPP) into 1-hydroxy-2-methyl-2-(E)-butenyl 4-diphosphate. The protein is 4-hydroxy-3-methylbut-2-en-1-yl diphosphate synthase (flavodoxin) of Bacillus cereus (strain AH187).